Here is a 66-residue protein sequence, read N- to C-terminus: Large ribosomal subunit protein bL35 (66 aa).

The protein belongs to the bacterial ribosomal protein bL35 family.

The chain is Large ribosomal subunit protein bL35 from Caulobacter sp. (strain K31).